A 560-amino-acid chain; its full sequence is MVWALTPVDTVRGAQRCYIFAAGTYKVGRKDCDVIVQTDTSISRVHAEIVVEKMVAWDPQSGAPANPSYVRVVDRSKYGTFFNKVQGTQGSRLHKDEDAMLADGDTVTFGTGSATFRLSFVPIVVFFHGKKSGRISPSLQAVMTSIGAYATRKWSDECTHVLVDESCSLTPELLDAVLAKKQIVLGDWFKVMAEKNIHTAMPSSTQYIPKLTLDGMEIQVVEIKLIESCLAGYTFILGSSEKYKFGDKLHALLESTGAKYLHVDEFCANSQDSGAGENDKDILLVPAKSPLEFSKISGLFPLSKITDVKLFAAILSGHLEATAIEPPAYIVASSNSTDETIVVDSDVEIDTATSDHTVAASKSEHHIEHISDDKKEVVAISEEDAVNLVEAKTSINLHSYQEKDEIVKPMEEDVKVIEKTATMRGFKVEGEDIPVMTKVPKDETLDSRDETCHVIYTQNLVVKSILQSARAESIETGGINFKRFRKRGAVSGNSFKDLIPYSREPYRESDYKRGTVIDFMREEKKRRQMEAIAEDLFNNAKPKKKAAAGSSIHTMLTGRR.

Residues Tyr-25 to Gly-87 form the FHA domain. In terms of domain architecture, BRCT spans Thr-115–Lys-190. Positions Tyr-511–Asp-518 match the Nuclear localization signal motif.

The protein belongs to the Nibrin family. In terms of assembly, component of the MRN complex composed of two heterodimers RAD50 and MRE11 associated with a single NBS1.

The protein resides in the nucleus. It localises to the chromosome. Component of the MRN complex, which plays a central role in double-strand break (DSB) repair, DNA recombination, maintenance of telomere integrity and meiosis. The MRN complex is involved in the repair of DNA double-strand breaks (DSBs) via homologous recombination (HR), an error-free mechanism which primarily occurs during S and G2 phases. The complex (1) mediates the end resection of damaged DNA, which generates proper single-stranded DNA, a key initial steps in HR, and is (2) required for the recruitment of other repair factors and efficient activation of ATM and ATR upon DNA damage. The MRN complex possesses single-strand endonuclease activity and double-strand-specific 3'-5' exonuclease activity, which are provided by MRE11, to initiate end resection, which is required for single-strand invasion and recombination. Within the MRN complex, NBS1 acts as a protein-protein adapter, which specifically recognizes and binds phosphorylated proteins, promoting their recruitment to DNA damage sites. Recruits MRE11 and RAD50 components of the MRN complex to DSBs in response to DNA damage. This Oryza sativa subsp. indica (Rice) protein is Nibrin homolog.